The following is a 272-amino-acid chain: Ribonuclease 3 (272 aa).

The segment at 1 to 22 (MSLQFLRSEASDGAGETSDASS) is disordered. In terms of domain architecture, RNase III spans 31 to 162 (TATHLARLTG…LVGAIYLDQG (132 aa)). Glu75 provides a ligand contact to Mg(2+). Asp79 is a catalytic residue. Asp148 and Glu151 together coordinate Mg(2+). Glu151 is an active-site residue. The region spanning 189–258 (NYKSRLIEYT…AKEAMKRLES (70 aa)) is the DRBM domain.

It belongs to the ribonuclease III family. In terms of assembly, homodimer. Requires Mg(2+) as cofactor.

Its subcellular location is the cytoplasm. The catalysed reaction is Endonucleolytic cleavage to 5'-phosphomonoester.. Functionally, digests double-stranded RNA. Involved in the processing of primary rRNA transcript to yield the immediate precursors to the large and small rRNAs (23S and 16S). Processes some mRNAs, and tRNAs when they are encoded in the rRNA operon. Processes pre-crRNA and tracrRNA of type II CRISPR loci if present in the organism. This Chlorobaculum tepidum (strain ATCC 49652 / DSM 12025 / NBRC 103806 / TLS) (Chlorobium tepidum) protein is Ribonuclease 3.